Consider the following 189-residue polypeptide: UPF0301 protein RMA_0049 (189 aa).

Belongs to the UPF0301 (AlgH) family.

This chain is UPF0301 protein RMA_0049, found in Rickettsia massiliae (strain Mtu5).